The following is a 130-amino-acid chain: Large ribosomal subunit protein bL12 (130 aa).

This sequence belongs to the bacterial ribosomal protein bL12 family. Homodimer. Part of the ribosomal stalk of the 50S ribosomal subunit. Forms a multimeric L10(L12)X complex, where L10 forms an elongated spine to which 2 to 4 L12 dimers bind in a sequential fashion. Binds GTP-bound translation factors.

Functionally, forms part of the ribosomal stalk which helps the ribosome interact with GTP-bound translation factors. Is thus essential for accurate translation. The chain is Large ribosomal subunit protein bL12 from Chlamydia muridarum (strain MoPn / Nigg).